A 487-amino-acid chain; its full sequence is MASQNPNKKKVLFVTSEIADLVKTGGLGDVSAALPRAMAHLHDVRVLIPGYPQVMNSENPIHIIGELGGHAALPPCKIGRMDMPDGLVIYVLICPELYARDGGPYGANNGRDWPDNHIRFARLGLAAADIAANLAQIHWCPDLVHAHDWPAGLAPAYMHWRGQRTPTLFTIHNLAYQGVTSLGSCPELGIPAHALQQEGMEFYGKMSFLKAGMAYSSHITTVSATYAQEITTPDFGCGLDGFLAAKTQQGLLSGIPNGIDESWDAATDPHLFAPFAIGDWEGKAINAAHVRELFGLKDSEGPLFAVVSRLVYQKGLDLTEAVSEYIVQNGGQIAIIGRGEPEEEQAMRELALRFPGQIGVRIGFNETDARRMFAGSDFLLMPSRYEPCGLSQMYAQRFGSLPVARNTGGLADTIENGVTGFLFNESTADSYREALSRAFKVFAFPELLNAMRCRAMAAPFNWCKAVEPYAELYEKLVAKALGKTHHK.

K23 is an ADP-alpha-D-glucose binding site.

It belongs to the glycosyltransferase 1 family. Bacterial/plant glycogen synthase subfamily.

It catalyses the reaction [(1-&gt;4)-alpha-D-glucosyl](n) + ADP-alpha-D-glucose = [(1-&gt;4)-alpha-D-glucosyl](n+1) + ADP + H(+). Its pathway is glycan biosynthesis; glycogen biosynthesis. In terms of biological role, synthesizes alpha-1,4-glucan chains using ADP-glucose. In Pseudomonas fluorescens (strain Pf0-1), this protein is Glycogen synthase.